The primary structure comprises 491 residues: Subtilase-type proteinase RRT12 (491 aa).

The signal sequence occupies residues 1 to 17; the sequence is MKPQCILISLLVNLAYA. 4 N-linked (GlcNAc...) asparagine glycosylation sites follow: N38, N64, N106, and N121. Residues 142-442 form the Peptidase S8 domain; it reads PFDVGDKDRY…FPRLNIEAIA (301 aa). Catalysis depends on charge relay system residues D174 and H205. Residues N268 and N356 are each glycosylated (N-linked (GlcNAc...) asparagine). The Charge relay system role is filled by S365. N-linked (GlcNAc...) asparagine glycosylation is present at N449.

The protein belongs to the peptidase S8 family. N-glycosylated.

The protein resides in the spore wall. Its function is as follows. Subtilisin-related protease involved in the formation of a protective dityrosine layer required for spore wall assembly. Identified in a screen for mutants with increased levels of rDNA transcription. This is Subtilase-type proteinase RRT12 (RRT12) from Saccharomyces cerevisiae (strain ATCC 204508 / S288c) (Baker's yeast).